A 456-amino-acid chain; its full sequence is UDP-N-acetylmuramate--L-alanine ligase (456 aa).

114–120 serves as a coordination point for ATP; that stretch reads GTHGKTT.

Belongs to the MurCDEF family.

It localises to the cytoplasm. It catalyses the reaction UDP-N-acetyl-alpha-D-muramate + L-alanine + ATP = UDP-N-acetyl-alpha-D-muramoyl-L-alanine + ADP + phosphate + H(+). Its pathway is cell wall biogenesis; peptidoglycan biosynthesis. Functionally, cell wall formation. The protein is UDP-N-acetylmuramate--L-alanine ligase (murC) of Porphyromonas gingivalis (strain ATCC BAA-308 / W83).